An 806-amino-acid polypeptide reads, in one-letter code: WEB family protein At3g02930, chloroplastic (806 aa).

A chloroplast-targeting transit peptide spans 1–78 (MASKIKNGLS…PTPPEKTQIR (78 aa)). Disordered stretches follow at residues 1–94 (MASK…QIKE) and 380–403 (KSEQKLGIAEEESSKSEKEAEKLK). The segment covering 9-22 (LSDTTLRKSSSTSL) has biased composition (low complexity). Polar residues predominate over residues 34–59 (PDSNSPSPTQQQSRLSFERPSSNSKP). 3 coiled-coil regions span residues 88–530 (QSVQ…FESA), 585–662 (DCLK…IEEN), and 698–757 (ETLD…EDLN). The span at 391–403 (ESSKSEKEAEKLK) shows a compositional bias: basic and acidic residues. 2 disordered regions span residues 684 to 725 (ENGY…EDET) and 746 to 777 (KESAKEEEEDLNVVDQSQKTSPVNGLTGEDEL). Composition is skewed to basic and acidic residues over residues 685-699 (NGYRSAEEKSSKVET) and 706-725 (KLEEDTEKKEKKERSPEDET). Residues 759–769 (VDQSQKTSPVN) show a composition bias toward polar residues.

It belongs to the WEB family.

It localises to the plastid. The protein resides in the chloroplast. This is WEB family protein At3g02930, chloroplastic from Arabidopsis thaliana (Mouse-ear cress).